The following is a 113-amino-acid chain: U11-theraphotoxin-Hhn1a (113 aa).

Residues 1 to 21 (MNTVRVTFLLVFVLAVSLGRA) form the signal peptide. A propeptide spanning residues 22-74 (DKEENRMEMQEKTEQGKSYLDFAENLLLQKLEELEAKLLEEDSEESRNSRQKR) is cleaved from the precursor. Positions 61 to 83 (EEDSEESRNSRQKRCIGEGVPCD) are disordered. 3 disulfide bridges follow: Cys75-Cys90, Cys82-Cys95, and Cys89-Cys110.

Belongs to the neurotoxin 14 (magi-1) family. 01 (HNTX-16) subfamily. Expressed by the venom gland.

The protein resides in the secreted. In terms of biological role, probable ion channel inhibitor. The protein is U11-theraphotoxin-Hhn1a of Cyriopagopus hainanus (Chinese bird spider).